A 129-amino-acid polypeptide reads, in one-letter code: Glycine cleavage system H protein (129 aa).

One can recognise a Lipoyl-binding domain in the interval Thr24–Lys106. Lys65 is modified (N6-lipoyllysine).

Belongs to the GcvH family. The glycine cleavage system is composed of four proteins: P, T, L and H. (R)-lipoate serves as cofactor.

Its function is as follows. The glycine cleavage system catalyzes the degradation of glycine. The H protein shuttles the methylamine group of glycine from the P protein to the T protein. The protein is Glycine cleavage system H protein of Pseudoalteromonas translucida (strain TAC 125).